A 2188-amino-acid polypeptide reads, in one-letter code: Phenolphthiocerol/phthiocerol polyketide synthase subunit C (2188 aa).

In terms of domain architecture, Ketosynthase family 3 (KS3) spans 34-462; it reads SEPIAVIGMG…GTNAHVVIEQ (429 aa). Active-site for beta-ketoacyl synthase activity residues include Cys210, His345, and His384. An acyltransferase region spans residues 572-890; sequence VFVYSGRGSQ…NLNTTHTTHP (319 aa). The active-site For malonyltransferase activity is Ser660. The interval 928–1050 is N-terminal hotdog fold; the sequence is HPLLGVGVTD…ATVARAEPLA (123 aa). The dehydratase stretch occupies residues 928–1093; it reads HPLLGVGVTD…QQHGPAFQGI (166 aa). A PKS/mFAS DH domain is found at 928–1223; sequence HPLLGVGVTD…MAVLGSGSGA (296 aa). Catalysis depends on His959, which acts as the Proton acceptor; for dehydratase activity. Residues 1067–1223 are C-terminal hotdog fold; the sequence is EDQLDPDDLY…MAVLGSGSGA (157 aa). The active-site Proton donor; for dehydratase activity is the Asp1129. The segment at 1467–1778 is enoylreductase; that stretch reads GRLDALNVHE…SGKHTGKIVI (312 aa). The tract at residues 1802–1981 is beta-ketoacyl reductase; the sequence is GGYLIVGGMG…GINWGPWADV (180 aa). 1803–1848 provides a ligand contact to NADP(+); the sequence is GYLIVGGMGGLGFVVARWLAEQGAGLIVLNGRSAPSDEVAAAIAEL. A Carrier domain is found at 2069 to 2145; it reads ERPGHLASAI…DLATALCERM (77 aa). At Ser2105 the chain carries O-(pantetheine 4'-phosphoryl)serine.

As to quaternary structure, homodimer. NADP(+) serves as cofactor. It depends on pantetheine 4'-phosphate as a cofactor.

The catalysed reaction is icosanoyl-[(phenol)carboxyphthiodiolenone synthase] + 2 (S)-methylmalonyl-CoA + 3 malonyl-CoA + 5 NADPH + 10 H(+) = C32-carboxyphthiodiolenone-[(phenol)carboxyphthiodiolenone synthase] + 5 CO2 + 5 NADP(+) + 5 CoA + 2 H2O. The enzyme catalyses docosanoyl-[(phenol)carboxyphthiodiolenone synthase] + 2 (S)-methylmalonyl-CoA + 3 malonyl-CoA + 5 NADPH + 10 H(+) = C34-carboxyphthiodiolenone-[(phenol)carboxyphthiodiolenone synthase] + 5 CO2 + 5 NADP(+) + 5 CoA + 2 H2O. It catalyses the reaction 17-(4-hydroxyphenyl)heptadecanoyl-[(phenol)carboxyphthiodiolenone synthase] + 2 (S)-methylmalonyl-CoA + 3 malonyl-CoA + 5 NADPH + 10 H(+) = C35-(phenol)carboxyphthiodiolenone-[(phenol)carboxyphthiodiolenone synthase] + 5 CO2 + 5 NADP(+) + 5 CoA + 2 H2O. It carries out the reaction 19-(4-hydroxyphenyl)nonadecanoyl-[(phenol)carboxyphthiodiolenone synthase] + 2 (S)-methylmalonyl-CoA + 3 malonyl-CoA + 5 NADPH + 10 H(+) = C37-(phenol)carboxyphthiodiolenone-[(phenol)carboxyphthiodiolenone synthase] + 5 CO2 + 5 NADP(+) + 5 CoA + 2 H2O. The protein operates within lipid metabolism; fatty acid biosynthesis. In terms of biological role, part of the PpsABCDE complex involved in the biosynthesis of the lipid core common to phthiocerols and phenolphthiocerols by successive additions of malonyl-CoA or methylmalonyl-CoA extender units. PpsA can accept as substrate the activated forms of either icosanoyl (C20), docosanoyl (C22) or lignoceroyl (C24) groups from FadD26, or a (4-hydroxyphenyl)-C17 or (4-hydroxyphenyl)-C19 fatty acyl from FadD29. PpsA initiates the biosynthesis and extends its substrate using a malonyl-CoA extender unit. The PpsB and PpsC proteins add the second and third malonyl-CoA extender units. PpsD adds an (R)-methylmalonyl unit and PpsE adds a second (R)-methylmalonyl unit. The incorporation of the methylmalonyl units results in formation of two branched methyl groups in the elongated product. This chain is Phenolphthiocerol/phthiocerol polyketide synthase subunit C (ppsC), found in Mycobacterium bovis (strain ATCC BAA-935 / AF2122/97).